We begin with the raw amino-acid sequence, 509 residues long: Phosphoprotein (509 aa).

3 disordered regions span residues 33 to 84, 131 to 236, and 256 to 281; these read LESW…LGFR, VQAN…DGNS, and PESR…SAKT. Residues 44–65 are compositionally biased toward polar residues; it reads GRATPNPDTSEGDHQNINQSCS. The segment covering 146 to 157 has biased composition (acidic residues); that stretch reads DGSDDSDVDSGP. Residue S151 is modified to Phosphoserine. Positions 178-187 are enriched in basic and acidic residues; that stretch reads RSTDVEKLEG. The segment covering 221 to 236 has biased composition (polar residues); that stretch reads SRPSAQSIKKGTDGNS. A multimerization region spans residues 303–376; it reads SEFEYEDDLF…LSSIMIAIPG (74 aa). Residues 459–509 form an interaction with the nucleocapsid (N-RNA) region; that stretch reads SSRSVIRSIIKSSKLNIDHKDYLLDLLNDVKGSKDLKEFHKMLTAILAKQP.

Belongs to the morbillivirus P protein family. Homotetramer. Interacts (via multimerization domain) with polymerase L; this interaction forms the polymerase L-P complex. Interacts (via N-terminus) with N0 (via Ncore); this interaction allows P to chaperon N0 to avoid N polymerization before encapsidation. Interacts (via C-terminus) with N-RNA template; this interaction positions the polymerase on the template for both transcription and replication. Interacts with host ISG15; this interaction disrupts the activity of the N0-P complex. Post-translationally, phosphorylation on serines by host CK2 is necessary for the formation of viral factories.

In terms of biological role, essential cofactor of the RNA polymerase L that plays a central role in the transcription and replication by forming the polymerase complex with RNA polymerase L and recruiting L to the genomic N-RNA template for RNA synthesis. Also plays a central role in the encapsidation of nascent RNA chains by forming the encapsidation complex with the nucleocapsid protein N (N-P complex). Acts as a chaperone for newly synthesized free N protein, so-called N0, allowing encapsidation of nascent RNA chains during replication. The nucleoprotein protein N prevents excessive phosphorylation of P, which leads to down-regulation of viral transcription/ replication. Participates, together with N, in the formation of viral factories (viroplasms), which are large inclusions in the host cytoplasm where replication takes place. The polypeptide is Phosphoprotein (P/V) (Capra hircus (Goat)).